The primary structure comprises 401 residues: Nicotinate phosphoribosyltransferase (401 aa).

Histidine 221 carries the post-translational modification Phosphohistidine; by autocatalysis.

It belongs to the NAPRTase family. Post-translationally, transiently phosphorylated on a His residue during the reaction cycle. Phosphorylation strongly increases the affinity for substrates and increases the rate of nicotinate D-ribonucleotide production. Dephosphorylation regenerates the low-affinity form of the enzyme, leading to product release.

It catalyses the reaction nicotinate + 5-phospho-alpha-D-ribose 1-diphosphate + ATP + H2O = nicotinate beta-D-ribonucleotide + ADP + phosphate + diphosphate. The protein operates within cofactor biosynthesis; NAD(+) biosynthesis; nicotinate D-ribonucleotide from nicotinate: step 1/1. Functionally, catalyzes the synthesis of beta-nicotinate D-ribonucleotide from nicotinate and 5-phospho-D-ribose 1-phosphate at the expense of ATP. In Erwinia tasmaniensis (strain DSM 17950 / CFBP 7177 / CIP 109463 / NCPPB 4357 / Et1/99), this protein is Nicotinate phosphoribosyltransferase.